Here is a 328-residue protein sequence, read N- to C-terminus: AA9 family lytic polysaccharide monooxygenase A (328 aa).

The signal sequence occupies residues 1 to 21; the sequence is MPSTKVAALSAVLALASTVAG. His-22 serves as a coordination point for Cu(2+). Residue His-22 is modified to Methylhistidine. Cystine bridges form between Cys-77–Cys-199 and Cys-118–Cys-122. An N-linked (GlcNAc...) asparagine glycan is attached at Asn-80. His-107 contacts Cu(2+). N-linked (GlcNAc...) asparagine glycans are attached at residues Asn-121 and Asn-159. Residues His-185 and Gln-194 each coordinate O2. Position 196 (Tyr-196) interacts with Cu(2+). O-linked (Man...) serine glycosylation is found at Ser-235 and Ser-237. Thr-238 and Thr-245 each carry an O-linked (Man...) threonine glycan.

It belongs to the polysaccharide monooxygenase AA9 family. Requires Cu(2+) as cofactor. In terms of processing, the catalytically essential N-terminal histidine His-22 is post-translationally modified by methylation to prevent protonation of the histidine side chain, and protect the critical active site of the enzyme from oxidative damage.

It is found in the secreted. The enzyme catalyses [(1-&gt;4)-beta-D-glucosyl]n+m + reduced acceptor + O2 = 4-dehydro-beta-D-glucosyl-[(1-&gt;4)-beta-D-glucosyl]n-1 + [(1-&gt;4)-beta-D-glucosyl]m + acceptor + H2O.. Its function is as follows. Lytic polysaccharide monooxygenase (LPMO) that depolymerizes crystalline and amorphous polysaccharides via the oxidation of scissile alpha- or beta-(1-4)-glycosidic bonds, yielding C1 and C4 oxidation products. Catalysis by LPMOs requires the reduction of the active-site copper from Cu(II) to Cu(I) by a reducing agent and H(2)O(2) or O(2) as a cosubstrate. Shows activity on cellulosic substrates (Avicel, carboxymethylcellulose) and xylan. This Talaromyces verruculosus (Penicillium verruculosum) protein is AA9 family lytic polysaccharide monooxygenase A.